A 230-amino-acid chain; its full sequence is MTEAAPKVGLLRGRFITFEGGEGSGKSTQINILAERLNAAKLRAIVTREPGGSPGAEIIRHLVLSGMGKLLGAYAETLLFAAARDDHVHTVIKPALEQGIWVLCDRFADSTRAYQGRLGDVLPGVLNALERVTIGDLKPDLTVILDVPVEIGMQRAAVRRGSGAPDRFEAEDVAFHQKLRDAYRDIAASDPQRCVVIDANADVNTVAAGVWAALRDRVLVADSSTKVTRA.

20-27 (GGEGSGKS) provides a ligand contact to ATP.

The protein belongs to the thymidylate kinase family.

It carries out the reaction dTMP + ATP = dTDP + ADP. Functionally, phosphorylation of dTMP to form dTDP in both de novo and salvage pathways of dTTP synthesis. This chain is Thymidylate kinase, found in Nitrobacter hamburgensis (strain DSM 10229 / NCIMB 13809 / X14).